Reading from the N-terminus, the 1930-residue chain is MPGGYKGECGDDVDPMPFLAPPEKERIEAMNKPYDIKKSCWVKDEKEGFIAGEIQSEQGDQVTVKTVNNQTVTVKKDDVQQMNPPKFYQASDMADMTFLNEASVLNNLRQRYTNMRIYTYSGLFCVTVNPYKWLPIYGARVANMYKGKKRTEMPPHLFSISDNAYHDMLMNRENQSMLITGESGAGKTENTKKVIQYFANVGGTGKQSSDGKGQGSLEDQIIQANPVLEAFGNAKTIRNNNSSRFGKFIRIHFGTTGKLAGADIESYLLEKSRVISQQAAERGYHIFYQILSNKKPELIESLLLVPNPKEYHWVSQGVTVVENMDDGEELQITDVAFDVLGFSAEEKIGIYKLTGGIMHFGNMKFKQKPREEQAEVDTTEVADKVSHLMGLNSGELQKGITRPRVKVGNEFVQKGQNVEQCNNSIGALGKAIYDKMFKWLVVRINKTLDTKMQRQFFIGVLDIAGFEIFEFNSFEQLCINFTNEKLQQFFNHHMFVLEQEEYKREGIEWVFIDFGLDLQACIDLLEKPMGIFSILEEQCVFPKATDATFKAALYDNHLGKSNNFLKPKGGKGKGPEAHFELVHYAGTVAYNITGWLEKNKDPLNETVVGLFQKSSLGLLALLFKEEEAPAGSKKQKRGSSFMTVSNFYREQLNKLMATLHSTAPHFVRCIVPNEFKQSGVVDAHLIMHQLACNGVLEGIRICRKGFPNRMQYPEFKQRYQVLNPNVIPQGFVDNKKASELLLGSIDLDVNEYKIGHTKVFFRAGILAKLEDMRDERLAKIMTMLQCRLRGFLMRIEFKKMLERRIGLKVIQRNTRKFLELRFWGWWKLYNKVKPLLNVARQEEEMKAKEEELRNAMSKTQELLSRVKELEEKMATLSQEKNDLTIQLQAEQENVIDAEERLTQMMKTKMDLESQISDMRERLEEEEGTAASLSATKRKLEGEMSDLKRDLEGLETTLAKTEKEKQALDHRVRTLTGDLSLREDSIAKLQKEKRALEELHQKTLDDLQAEEDKVNHLTKTNSKLSTQIHELEDNWEQEKKIRAEVEKARRKAESDLKMTIDNLNDMERSKLDLEEVVKKRDMEINSVNSKYEDEQSLNSTLQRKLKEHQARIEELEEELEAERSMRAKVEKQRSDLSRDLEDLSDRLEEAGGATSAQIEQNRKREAELLKLRRELEEAALQSEAAASTLRKKHTDSMAELTEHVENLQRVKSKLEKDKQVMKAEIDDLNASMETVQKSKMNAEAHIRKLEDSLSEANAKVAELERNQAEINAVRTRLQAENGELSREYEESQSRLNQILRIKTSLTSQVDDYKRQLDEESKSRSAAMVSLANTKHDLDLVKEQLEEEQGGKSELQRLVSKLNTEVTTWRTKYETDAIQRTEELEETKRKLAARLQEAEETAEAAQARAASLEKNKQRLQAEVEDLTIDLEKANAAAAALDKKQRVFDKMLAEWQQKCEELQVEVDSSQKECRMYMTESFKIKTAYEESLEHLESVKKENKTLQEEIKELIDQLGEGGRSVHELQKLKKKLEIEKEELQVALEEAESSLEVEESKVIRIQLELAQVKADIDRRIHEKEEEFEATRKNHQRAIESLQASLEAEAKGRAEALRLKKKMETDLNEMEIQLDHANKNNSELVKTLKRLQQQIKDLQVQMDEDARQHEELREQYNLQERRLSLLQTELEEVRSGLEGSERSRKLLEQEVVEITERHNEVNIQNQSLLVVKRKLESDVQRISSEHEELISEFRSADERAKKAMTDAARMAEELRQEQDHCMHLEKIKKNYEITIKDLQAKMEEAEQLALKGGKRTIMKLEARIKELETELDGEQKQHVETVKTLRKNERRLKELVFQTEEDHKTNQRMQELVEKLQNKLKVYKRQIEEAEEQANQTLARYRKTVHELDDAEERAGMAETALNKLRTRHRVAGKGITSV.

The region spanning 35–84 (DIKKSCWVKDEKEGFIAGEIQSEQGDQVTVKTVNNQTVTVKKDDVQQMNP) is the Myosin N-terminal SH3-like domain. One can recognise a Myosin motor domain in the interval 88–774 (YQASDMADMT…ILAKLEDMRD (687 aa)). Residue 181–188 (GESGAGKT) participates in ATP binding. Actin-binding regions lie at residues 652-674 (LNKLMATLHSTAPHFVRCIVPNE) and 753-767 (KIGHTKVFFRAGILA). An IQ domain is found at 777-806 (LAKIMTMLQCRLRGFLMRIEFKKMLERRIG). The stretch at 835 to 1921 (LLNVARQEEE…ALNKLRTRHR (1087 aa)) forms a coiled coil. The tract at residues 1116-1137 (EELEAERSMRAKVEKQRSDLSR) is disordered. A compositionally biased stretch (basic and acidic residues) spans 1120–1137 (AERSMRAKVEKQRSDLSR).

It belongs to the TRAFAC class myosin-kinesin ATPase superfamily. Myosin family.

It is found in the cytoplasm. The protein resides in the myofibril. May play a role in masticatory muscles contraction. This Canis lupus familiaris (Dog) protein is Myosin-16.